A 920-amino-acid polypeptide reads, in one-letter code: Sensor histidine kinase SsrA (920 aa).

Residues 1–19 (MNLLNLKNTLQTSLVIRLT) are Cytoplasmic-facing. Residues 20–40 (FLFLLTTIIIWLLSVLTAAYI) form a helical membrane-spanning segment. Residues 41-291 (SMVQKRQHII…YGNLHNRILK (251 aa)) lie on the Periplasmic side of the membrane. Residues 292–312 (IILQQIPFTLTALVLMTSAFC) form a helical membrane-spanning segment. Residues 313–920 (WLLHRSLAKP…RMIFKNYTIT (608 aa)) are Cytoplasmic-facing. Positions 317-369 (RSLAKPLWRFVDVINKTATAPLSTRLPAQRLDELDSIAGAFNQLLDTLQVQYD) constitute an HAMP domain. Residues 354-395 (AGAFNQLLDTLQVQYDNLENKVAERTQALNEAKKRAERANKR) are a coiled coil. The Histidine kinase domain occupies 402–614 (VISHELRTPM…CVSLVLPLQE (213 aa)). 2 residues coordinate ATP: histidine 405 and aspartate 549. Position 405 is a phosphohistidine; by autocatalysis (histidine 405). Positions 690-808 (QILLVDDADI…TLARYISIAA (119 aa)) constitute a Response regulatory domain. Aspartate 739 bears the 4-aspartylphosphate mark.

Post-translationally, autophosphorylated.

It is found in the cell inner membrane. The enzyme catalyses ATP + protein L-histidine = ADP + protein N-phospho-L-histidine.. In terms of biological role, member of the two-component regulatory system SsrA/SsrB (SpiR/SsrB) that is required for intracellular proliferation and systemic dissemination within the host. When inside acidic Salmonella-containing vesicles (SCV) within host cells the SsrA sensor kinase autophosphorylates and the phosphoryl group is transferred to the response regulator SsrB; phosphorylated SsrB activates the expression of genes encoding virulence proteins, including pathogenicity island 2 (SPI2) and other horizontally acquired genes, and antagonizes the action of transcriptional repressor hns (H-NS). This Salmonella typhimurium (strain LT2 / SGSC1412 / ATCC 700720) protein is Sensor histidine kinase SsrA.